A 160-amino-acid polypeptide reads, in one-letter code: NADH-quinone oxidoreductase subunit I (160 aa).

4Fe-4S ferredoxin-type domains follow at residues 52–81 and 91–120; these read RRYSNGEERCIACKLCEVICPAQAIVIEAE and TRYDIDMTKCIYCGLCQEACPVDAIVEGPN. 8 residues coordinate [4Fe-4S] cluster: Cys61, Cys64, Cys67, Cys71, Cys100, Cys103, Cys106, and Cys110.

It belongs to the complex I 23 kDa subunit family. As to quaternary structure, NDH-1 is composed of 14 different subunits. Subunits NuoA, H, J, K, L, M, N constitute the membrane sector of the complex. [4Fe-4S] cluster is required as a cofactor.

It localises to the cell membrane. The catalysed reaction is a quinone + NADH + 5 H(+)(in) = a quinol + NAD(+) + 4 H(+)(out). NDH-1 shuttles electrons from NADH, via FMN and iron-sulfur (Fe-S) centers, to quinones in the respiratory chain. The immediate electron acceptor for the enzyme in this species is believed to be ubiquinone. Couples the redox reaction to proton translocation (for every two electrons transferred, four hydrogen ions are translocated across the cytoplasmic membrane), and thus conserves the redox energy in a proton gradient. The protein is NADH-quinone oxidoreductase subunit I of Wolbachia sp. subsp. Brugia malayi (strain TRS).